We begin with the raw amino-acid sequence, 310 residues long: uncharacterized protein (310 aa).

5 helical membrane-spanning segments follow: residues 10–30, 44–64, 78–98, 113–133, and 161–181; these read AVLS…AYAI, TVNL…ATPA, FSSG…GYSA, LGIA…WILW, and VVVA…PLIA. Positions 285-297 are enriched in basic and acidic residues; sequence PLEDPKSWQHPDE. Residues 285–310 are disordered; that stretch reads PLEDPKSWQHPDEFPPSAPLNRDKPN.

The protein belongs to the cation diffusion facilitator (CDF) transporter (TC 2.A.4) family.

Its subcellular location is the cell membrane. This is an uncharacterized protein from Synechocystis sp. (strain ATCC 27184 / PCC 6803 / Kazusa).